Reading from the N-terminus, the 464-residue chain is 2-oxoadipate dioxygenase/decarboxylase (464 aa).

2-oxoadipate is bound by residues His-70, Arg-74, and His-226. His-70 serves as a coordination point for Fe(2+). Residues His-226 and Glu-294 each contribute to the Fe(2+) site. 2-oxoadipate is bound at residue Val-402.

This sequence belongs to the 2-oxoadipate dioxygenase/decarboxylase family. Requires Fe(2+) as cofactor.

The enzyme catalyses 2-oxoadipate + O2 = (R)-2-hydroxyglutarate + CO2. It functions in the pathway amino-acid degradation. Inhibited by EDTA. Functionally, catalyzes the decarboxylation and hydroxylation of 2-oxoadipate (2OA) to form D-2-hydroxyglutarate (D-2-HGA). Is specific for 2-oxoadipate. Is involved in a D-lysine catabolic pathway. This Pseudomonas putida (strain ATCC 47054 / DSM 6125 / CFBP 8728 / NCIMB 11950 / KT2440) protein is 2-oxoadipate dioxygenase/decarboxylase.